The sequence spans 117 residues: Large ribosomal subunit protein uL18 (117 aa).

The protein belongs to the universal ribosomal protein uL18 family. In terms of assembly, part of the 50S ribosomal subunit; part of the 5S rRNA/L5/L18/L25 subcomplex. Contacts the 5S and 23S rRNAs.

In terms of biological role, this is one of the proteins that bind and probably mediate the attachment of the 5S RNA into the large ribosomal subunit, where it forms part of the central protuberance. In Polynucleobacter asymbioticus (strain DSM 18221 / CIP 109841 / QLW-P1DMWA-1) (Polynucleobacter necessarius subsp. asymbioticus), this protein is Large ribosomal subunit protein uL18.